The chain runs to 130 residues: Small ribosomal subunit protein uS9 (130 aa).

Residues 106–130 (RDSRKVERKKPGLKKARKASQFSKR) are disordered. The span at 111–130 (VERKKPGLKKARKASQFSKR) shows a compositional bias: basic residues.

Belongs to the universal ribosomal protein uS9 family.

In Streptococcus pneumoniae serotype 2 (strain D39 / NCTC 7466), this protein is Small ribosomal subunit protein uS9.